Reading from the N-terminus, the 137-residue chain is Putative pre-16S rRNA nuclease (137 aa).

It belongs to the YqgF nuclease family.

It is found in the cytoplasm. In terms of biological role, could be a nuclease involved in processing of the 5'-end of pre-16S rRNA. The polypeptide is Putative pre-16S rRNA nuclease (Clostridium botulinum (strain Alaska E43 / Type E3)).